The following is a 90-amino-acid chain: Probable Fe(2+)-trafficking protein (90 aa).

The protein belongs to the Fe(2+)-trafficking protein family. In terms of assembly, monomer.

In terms of biological role, could be a mediator in iron transactions between iron acquisition and iron-requiring processes, such as synthesis and/or repair of Fe-S clusters in biosynthetic enzymes. The polypeptide is Probable Fe(2+)-trafficking protein (Serratia proteamaculans (strain 568)).